A 438-amino-acid polypeptide reads, in one-letter code: Putative formin-like protein 21a (438 aa).

The segment at 1–74 is disordered; the sequence is MSPVEISGAD…RVLPRPPPPP (74 aa). The span at 22-61 shows a compositional bias: pro residues; that stretch reads PLPPPPPPPPPPMRRRAPLPPPPPPPMRRRAPLPPPPPPA. One can recognise an FH2 domain in the interval 124–438; it reads FPCPSKKKSS…SYGYFDQPWI (315 aa).

This sequence belongs to the formin-like family. Class-II subfamily.

The protein is Putative formin-like protein 21a (FH21A) of Arabidopsis thaliana (Mouse-ear cress).